The sequence spans 449 residues: Exodeoxyribonuclease 7 large subunit (449 aa).

This sequence belongs to the XseA family. In terms of assembly, heterooligomer composed of large and small subunits.

It localises to the cytoplasm. It carries out the reaction Exonucleolytic cleavage in either 5'- to 3'- or 3'- to 5'-direction to yield nucleoside 5'-phosphates.. In terms of biological role, bidirectionally degrades single-stranded DNA into large acid-insoluble oligonucleotides, which are then degraded further into small acid-soluble oligonucleotides. This is Exodeoxyribonuclease 7 large subunit from Salmonella paratyphi A (strain ATCC 9150 / SARB42).